Consider the following 445-residue polypeptide: tRNA modification GTPase MnmE (445 aa).

3 residues coordinate (6S)-5-formyl-5,6,7,8-tetrahydrofolate: Arg21, Glu78, and Lys117. The region spanning 213–370 (GFRIALVGAP…LKETLSERVV (158 aa)) is the TrmE-type G domain. GTP is bound by residues 223-228 (NAGKST), 242-248 (TATPGTT), and 267-270 (DTAG). Residues Ser227 and Thr248 each coordinate Mg(2+). Lys445 is a binding site for (6S)-5-formyl-5,6,7,8-tetrahydrofolate.

The protein belongs to the TRAFAC class TrmE-Era-EngA-EngB-Septin-like GTPase superfamily. TrmE GTPase family. As to quaternary structure, homodimer. Heterotetramer of two MnmE and two MnmG subunits. K(+) serves as cofactor.

Its subcellular location is the cytoplasm. Functionally, exhibits a very high intrinsic GTPase hydrolysis rate. Involved in the addition of a carboxymethylaminomethyl (cmnm) group at the wobble position (U34) of certain tRNAs, forming tRNA-cmnm(5)s(2)U34. The chain is tRNA modification GTPase MnmE from Phenylobacterium zucineum (strain HLK1).